The primary structure comprises 136 residues: Large ribosomal subunit protein uL16 (136 aa).

This sequence belongs to the universal ribosomal protein uL16 family. In terms of assembly, part of the 50S ribosomal subunit.

Binds 23S rRNA and is also seen to make contacts with the A and possibly P site tRNAs. The sequence is that of Large ribosomal subunit protein uL16 from Serratia proteamaculans (strain 568).